Reading from the N-terminus, the 295-residue chain is Excinuclease cho (295 aa).

In terms of domain architecture, GIY-YIG spans Thr-33 to Lys-108.

In terms of biological role, incises the DNA at the 3' side of a lesion during nucleotide excision repair. Incises the DNA farther away from the lesion than UvrC. Not able to incise the 5' site of a lesion. In vitro, the incision activity of Cho is UvrA and UvrB dependent. When a lesion remains because UvrC is not able to induce the 3' incision, Cho incises the DNA. Then UvrC makes the 5' incision. The combined action of Cho and UvrC broadens the substrate range of nucleotide excision repair. This chain is Excinuclease cho (cho), found in Escherichia coli (strain K12).